A 389-amino-acid chain; its full sequence is Putative serine/threonine-protein kinase (389 aa).

The 342-residue stretch at 15–356 (YRIEKLINRG…LMVSNYLPWY (342 aa)) folds into the Protein kinase domain. Asp164 acts as the Proton acceptor in catalysis.

It belongs to the protein kinase superfamily. Ser/Thr protein kinase family.

It catalyses the reaction L-seryl-[protein] + ATP = O-phospho-L-seryl-[protein] + ADP + H(+). The enzyme catalyses L-threonyl-[protein] + ATP = O-phospho-L-threonyl-[protein] + ADP + H(+). This is Putative serine/threonine-protein kinase from Mycoplasma pneumoniae (strain ATCC 29342 / M129 / Subtype 1) (Mycoplasmoides pneumoniae).